Reading from the N-terminus, the 297-residue chain is Mycothiol acetyltransferase (297 aa).

2 N-acetyltransferase domains span residues 8-153 (DALD…PPLP) and 156-297 (VALR…QYAL). Residue E36 coordinates 1D-myo-inositol 2-(L-cysteinylamino)-2-deoxy-alpha-D-glucopyranoside. 80 to 82 (LAV) contributes to the acetyl-CoA binding site. 1D-myo-inositol 2-(L-cysteinylamino)-2-deoxy-alpha-D-glucopyranoside-binding residues include E183, K223, and E231. Acetyl-CoA is bound by residues 235–237 (VGV) and 242–248 (QGGGLGK). Residue Y269 coordinates 1D-myo-inositol 2-(L-cysteinylamino)-2-deoxy-alpha-D-glucopyranoside. Acetyl-CoA is bound at residue 274–279 (NSPAVR).

Belongs to the acetyltransferase family. MshD subfamily. As to quaternary structure, monomer.

The enzyme catalyses 1D-myo-inositol 2-(L-cysteinylamino)-2-deoxy-alpha-D-glucopyranoside + acetyl-CoA = mycothiol + CoA + H(+). Functionally, catalyzes the transfer of acetyl from acetyl-CoA to desacetylmycothiol (Cys-GlcN-Ins) to form mycothiol. The protein is Mycothiol acetyltransferase of Actinosynnema mirum (strain ATCC 29888 / DSM 43827 / JCM 3225 / NBRC 14064 / NCIMB 13271 / NRRL B-12336 / IMRU 3971 / 101).